A 627-amino-acid polypeptide reads, in one-letter code: Carene synthase, chloroplastic (627 aa).

A chloroplast-targeting transit peptide spans 1–36; that stretch reads MSVISILPLASKSCLYKSLMSSTHELKALCRPIATL. Mg(2+) contacts are provided by aspartate 378, aspartate 382, and aspartate 530. The DDXXD motif motif lies at 378 to 382; it reads DDMYD.

It belongs to the terpene synthase family. Tpsd subfamily. Mg(2+) is required as a cofactor. Mn(2+) serves as cofactor.

It localises to the plastid. Its subcellular location is the chloroplast. The catalysed reaction is (2E)-geranyl diphosphate = (+)-car-3-ene + diphosphate. It participates in terpene metabolism; oleoresin biosynthesis. Functionally, terpene synthase (TPS) involved in defensive oleoresin formation in conifers in response to insect attack or other injury. The chain is Carene synthase, chloroplastic (JF67) from Picea abies (Norway spruce).